The primary structure comprises 79 residues: Conotoxin Leo-O1 (79 aa).

The N-terminal stretch at 1–22 (MKLTCMMLVAVLFLTAWTFVTA) is a signal peptide. A propeptide spanning residues 23 to 51 (NVSRNGLENLFPEERHEMMNPEAAKLNNR) is cleaved from the precursor. Intrachain disulfides connect cysteine 53/cysteine 70, cysteine 60/cysteine 74, and cysteine 69/cysteine 78.

The protein belongs to the conotoxin O1 superfamily. Expressed by the venom duct.

It localises to the secreted. This is Conotoxin Leo-O1 from Conus leopardus (Leopard cone).